A 340-amino-acid chain; its full sequence is Putative RRN3-like protein RRN3P2 (340 aa).

Belongs to the RRN3 family.

This is Putative RRN3-like protein RRN3P2 (RRN3P2) from Homo sapiens (Human).